The chain runs to 367 residues: GMP synthase [glutamine-hydrolyzing] subunit B (367 aa).

The 189-residue stretch at 2 to 190 folds into the GMPS ATP-PPase domain; the sequence is FDPASFVEEI…LKLPKEISER (189 aa). 29-35 contributes to the ATP binding site; the sequence is SGGVDST.

As to quaternary structure, heterodimer composed of a glutamine amidotransferase subunit (A) and a GMP-binding subunit (B).

The enzyme catalyses XMP + L-glutamine + ATP + H2O = GMP + L-glutamate + AMP + diphosphate + 2 H(+). It participates in purine metabolism; GMP biosynthesis; GMP from XMP (L-Gln route): step 1/1. In terms of biological role, catalyzes the synthesis of GMP from XMP. This is GMP synthase [glutamine-hydrolyzing] subunit B (guaAB) from Saccharolobus solfataricus (strain ATCC 35092 / DSM 1617 / JCM 11322 / P2) (Sulfolobus solfataricus).